Reading from the N-terminus, the 475-residue chain is FAD-dependent monooxygenase spyC (475 aa).

A signal peptide spans 1-24 (MTAKPPFKVIIVGGSIAGLTLAHC). Residues Glu36, Gly50, Arg109, Asp310, and Ala323 each coordinate FAD. The helical transmembrane segment at 444–464 (LLIPFLYPVVAFSLCVLAWIG) threads the bilayer.

This sequence belongs to the paxM FAD-dependent monooxygenase family. It depends on FAD as a cofactor.

It is found in the membrane. It catalyses the reaction (2E,6E,10E)-geranylgeranyl-triacetate lactone + AH2 + O2 = (S)-(2E,6E,10E)-epoxygeranylgeranyl-triacetate lactone + A + H2O. It functions in the pathway secondary metabolite biosynthesis; terpenoid biosynthesis. FAD-dependent monooxygenase spyC; part of the gene cluster that mediates the biosynthesis of meroterpenoids called sartorypyrones. Within the pathway, spyC catalyzes the epoxidation of geranylgeranyl-triacetate lactone at the terminal olein to yield epoxygeranylgeranyl-triacetate lactone. The biosynthesis of sartorypyrones begins with the production of triacetic acid lactone (TAL) by the NR-PKS spyA using one molecule of acetyl-CoA and two molecules of malonyl-CoA. The prenyltransferase spyF then conjugates geranylgeranyl pyrophosphate (GGPP) to TAL to form geranylgeranyl-triacetate lactone, for which the pathway-specific geranylgeranyl pyrophosphate synthase (GGPS) spyE is required to provide GGPP. Subsequently, geranylgeranyl-triacetate lactone is epoxidized at the terminal olein by the FAD-dependent monooxygenase spyC, followed by cyclization of the terpenoid component catalyzed by the terpene cyclase spyD to produce both the bicyclic sartorypyrone F and the monocyclic sartorypyrone D. Finally, the last step of the biosynthesis involves the acetylation of the meroterpenoids sartorypyrones D and F by the acetyltransferase SpyB to produce sartorypyrones A and G, respectively. The protein is FAD-dependent monooxygenase spyC of Aspergillus fumigatus (strain ATCC MYA-4609 / CBS 101355 / FGSC A1100 / Af293) (Neosartorya fumigata).